The following is a 342-amino-acid chain: Glycerol-3-phosphate dehydrogenase [NAD(P)+] (342 aa).

NADPH is bound by residues tryptophan 11, arginine 33, and lysine 107. Sn-glycerol 3-phosphate contacts are provided by lysine 107, glycine 143, and serine 145. Alanine 147 is a binding site for NADPH. Sn-glycerol 3-phosphate contacts are provided by lysine 198, aspartate 251, serine 261, arginine 262, and asparagine 263. The active-site Proton acceptor is lysine 198. Arginine 262 is an NADPH binding site. Residues valine 286 and glutamate 288 each contribute to the NADPH site.

The protein belongs to the NAD-dependent glycerol-3-phosphate dehydrogenase family.

The protein localises to the cytoplasm. It carries out the reaction sn-glycerol 3-phosphate + NAD(+) = dihydroxyacetone phosphate + NADH + H(+). The enzyme catalyses sn-glycerol 3-phosphate + NADP(+) = dihydroxyacetone phosphate + NADPH + H(+). The protein operates within membrane lipid metabolism; glycerophospholipid metabolism. Functionally, catalyzes the reduction of the glycolytic intermediate dihydroxyacetone phosphate (DHAP) to sn-glycerol 3-phosphate (G3P), the key precursor for phospholipid synthesis. The sequence is that of Glycerol-3-phosphate dehydrogenase [NAD(P)+] from Paracidovorax citrulli (strain AAC00-1) (Acidovorax citrulli).